We begin with the raw amino-acid sequence, 263 residues long: MISKTLQLSNNRTAHYFEQGEGEPLVLIHGVGMQAEAWYPQIEYFSKHYHVISLDMPGHGQSTALAADAQLQDFVDWAIECIHTLNLGPVNLAGHSMGSLITTGVSVTRPDLVKRMAVLNGVYKRTHAAREAVIQRAEALKQGHLDIETPLQRWFGQSEIEKIASERVKLWLENVNMSGYTTAYRAFAQGDLVYADGWSDIECPALVLTGTDDPNSTAEMTIQMAHQAKHGTAIVIENERHMVNLTAPEKVNQAMQAWLETTP.

The active-site Nucleophile is the Ser-96. Residues Asn-120 and His-241 contribute to the active site.

The protein belongs to the AB hydrolase superfamily. Monomer.

It carries out the reaction (E)-2-((N-methylformamido) methylene)succinate + 2 H2O + H(+) = succinate semialdehyde + methylamine + formate + CO2. In terms of biological role, involved in the degradation of the pyridine ring of trigonelline (TG; N-methylnicotinate) into succinate and methylamine as carbon and nitrogen sources, respectively. Catalyzes the hydrolysis of (E)-2-((N-methylformamido)methylene)succinate (MFMS) into formic acid, succinate semialdehyde (SSA), methylamine and carbon dioxide. The chain is (E)-2-((N-methylformamido)methylene)succinate hydrolase from Acinetobacter baylyi (strain ATCC 33305 / BD413 / ADP1).